Here is a 298-residue protein sequence, read N- to C-terminus: Apolipoprotein E (298 aa).

The first 18 residues, 1-18 (MKVLWAALVVTLLAGCRA), serve as a signal peptide directing secretion. 8 tandem repeats follow at residues 74-94 (LLIEDTMKEVKDYKAELEKEL), 95-116 (GPVAEDTKARLAKELQAAQARL), 117-138 (GADMEEVRNRLSQYRSEVQAML), 139-160 (GQSSEELRARLTSHLRKMRKRL), 161-182 (QRDIDELQKRMAVYKAGAQEGA), 183-203 (ERGVSAIRERLGSLIEQGRLQ), 204-221 (ALTSQPLQERAQAWGEQM), and 222-243 (RGRLEKVGSQARDRLEEVREQM). The segment at 95–243 (GPVAEDTKAR…DRLEEVREQM (149 aa)) is 8 X 22 AA approximate tandem repeats. Methionine sulfoxide is present on Met137. Ser141 carries the phosphoserine modification. The LDL and other lipoprotein receptors binding stretch occupies residues 151-161 (SHLRKMRKRLQ). 155–158 (KMRK) serves as a coordination point for heparin. The tract at residues 203 to 271 (QALTSQPLQE…KSWFEPMMED (69 aa)) is lipid-binding and lipoprotein association. 217–224 (WGEQMRGR) is a binding site for heparin. The specificity for association with VLDL stretch occupies residues 259–271 (ARLKSWFEPMMED).

It belongs to the apolipoprotein A1/A4/E family. Homotetramer. May interact with ABCA1; functionally associated with ABCA1 in the biogenesis of HDLs. May interact with APP/A4 amyloid-beta peptide; the interaction is extremely stable in vitro but its physiological significance is unclear. May interact with MAPT. May interact with MAP2. In the cerebrospinal fluid, interacts with secreted SORL1. Interacts with PMEL; this allows the loading of PMEL luminal fragment on ILVs to induce fibril nucleation. APOE exists as multiple glycosylated and sialylated glycoforms within cells and in plasma. The extent of glycosylation and sialylation are tissue and context specific. Post-translationally, glycated in plasma VLDL. In terms of processing, phosphorylated by FAM20C in the extracellular medium.

The protein resides in the secreted. It localises to the extracellular space. It is found in the extracellular matrix. The protein localises to the extracellular vesicle. Its subcellular location is the endosome. The protein resides in the multivesicular body. Its function is as follows. APOE is an apolipoprotein, a protein associating with lipid particles, that mainly functions in lipoprotein-mediated lipid transport between organs via the plasma and interstitial fluids. APOE is a core component of plasma lipoproteins and is involved in their production, conversion and clearance. Apolipoproteins are amphipathic molecules that interact both with lipids of the lipoprotein particle core and the aqueous environment of the plasma. As such, APOE associates with chylomicrons, chylomicron remnants, very low density lipoproteins (VLDL) and intermediate density lipoproteins (IDL) but shows a preferential binding to high-density lipoproteins (HDL). It also binds a wide range of cellular receptors including the LDL receptor/LDLR, the LDL receptor-related proteins LRP1, LRP2 and LRP8 and the very low-density lipoprotein receptor/VLDLR that mediate the cellular uptake of the APOE-containing lipoprotein particles. Finally, APOE also has a heparin-binding activity and binds heparan-sulfate proteoglycans on the surface of cells, a property that supports the capture and the receptor-mediated uptake of APOE-containing lipoproteins by cells. A main function of APOE is to mediate lipoprotein clearance through the uptake of chylomicrons, VLDLs, and HDLs by hepatocytes. APOE is also involved in the biosynthesis by the liver of VLDLs as well as their uptake by peripheral tissues ensuring the delivery of triglycerides and energy storage in muscle, heart and adipose tissues. By participating in the lipoprotein-mediated distribution of lipids among tissues, APOE plays a critical role in plasma and tissues lipid homeostasis. APOE is also involved in two steps of reverse cholesterol transport, the HDLs-mediated transport of cholesterol from peripheral tissues to the liver, and thereby plays an important role in cholesterol homeostasis. First, it is functionally associated with ABCA1 in the biogenesis of HDLs in tissues. Second, it is enriched in circulating HDLs and mediates their uptake by hepatocytes. APOE also plays an important role in lipid transport in the central nervous system, regulating neuron survival and sprouting. This is Apolipoprotein E (APOE) from Cavia tschudii (Montane guinea pig).